The chain runs to 287 residues: Shikimate dehydrogenase (NADP(+)) (287 aa).

Shikimate contacts are provided by residues 20–22 (SRS) and Thr-67. Lys-71 functions as the Proton acceptor in the catalytic mechanism. Glu-84 serves as a coordination point for NADP(+). Shikimate is bound by residues Asn-93 and Asp-108. Residues 132 to 136 (GAGGA) and Met-226 contribute to the NADP(+) site. A shikimate-binding site is contributed by Tyr-228. Gly-250 contacts NADP(+).

The protein belongs to the shikimate dehydrogenase family. In terms of assembly, homodimer.

It catalyses the reaction shikimate + NADP(+) = 3-dehydroshikimate + NADPH + H(+). It functions in the pathway metabolic intermediate biosynthesis; chorismate biosynthesis; chorismate from D-erythrose 4-phosphate and phosphoenolpyruvate: step 4/7. Involved in the biosynthesis of the chorismate, which leads to the biosynthesis of aromatic amino acids. Catalyzes the reversible NADPH linked reduction of 3-dehydroshikimate (DHSA) to yield shikimate (SA). In Bordetella petrii (strain ATCC BAA-461 / DSM 12804 / CCUG 43448), this protein is Shikimate dehydrogenase (NADP(+)).